Consider the following 1375-residue polypeptide: Probable GMP synthase [glutamine-hydrolyzing] (1375 aa).

The Glutamine amidotransferase type-1; first part domain maps to 7 to 119 (QILVLDFGSQ…VLEIMESSQD (113 aa)). Cys84 acts as the Nucleophile in catalysis. The tract at residues 120-500 (SKDSSCFAFQ…NNATQGFKSC (381 aa)) is insert-1. 2 consecutive N-acetyltransferase domains span residues 141 to 300 (LSFD…KALE) and 318 to 484 (VFLR…LEKK). The region spanning 501 to 580 (SLFKGIKQDS…AVGICGANTC (80 aa)) is the Glutamine amidotransferase type-1; second part domain. Active-site residues include His554 and Glu556. An insert-2 region spans residues 597–1071 (IVYGGKAHCE…SGVANSLKIT (475 aa)). Residues 612-765 (MQIQEAFKHI…ELIPLSIARE (154 aa)) enclose the N-acetyltransferase 3 domain. Residues 1011-1036 (RIVDSQHTESSDIKGQSHLESSADSG) form a disordered region. The span at 1014 to 1027 (DSQHTESSDIKGQS) shows a compositional bias: basic and acidic residues. In terms of domain architecture, GMPS ATP-PPase spans 1055–1250 (YLEGNDRSGV…LGMPESMLMR (196 aa)). Position 1083-1089 (1083-1089 (SGGVDSS)) interacts with ATP.

In terms of assembly, homodimer.

The catalysed reaction is XMP + L-glutamine + ATP + H2O = GMP + L-glutamate + AMP + diphosphate + 2 H(+). The protein operates within purine metabolism; GMP biosynthesis; GMP from XMP (L-Gln route): step 1/1. Catalyzes the synthesis of GMP from XMP. This is Probable GMP synthase [glutamine-hydrolyzing] (guaA) from Helicobacter hepaticus (strain ATCC 51449 / 3B1).